A 136-amino-acid chain; its full sequence is Small ribosomal subunit protein eS6 (136 aa).

Belongs to the eukaryotic ribosomal protein eS6 family.

The sequence is that of Small ribosomal subunit protein eS6 from Methanosarcina acetivorans (strain ATCC 35395 / DSM 2834 / JCM 12185 / C2A).